A 557-amino-acid polypeptide reads, in one-letter code: Estrogen receptor beta (557 aa).

A modulating region spans residues 1-154 (MMAAASSPEK…SSGGKADLHY (154 aa)). 2 NR C4-type zinc fingers span residues 155-175 (CAVC…CEGC) and 191-215 (CPAT…LRKC). The nuclear receptor DNA-binding region spans 155-220 (CAVCHDYASG…RLRKCYEVGM (66 aa)). A disordered region spans residues 240 to 268 (LTRLSSQGKTAEPKGITGPAEGSLNKPEK). Residues 272-508 (TPEQLIERIL…DLLLEMLDAH (237 aa)) form the NR LBD domain. The interval 513–557 (SCLPHQPPQQDSKDQSEVPAPLHSSAGGPSNTWTPSSARAGGESQ) is disordered. Residues 539–557 (GGPSNTWTPSSARAGGESQ) are compositionally biased toward polar residues.

Belongs to the nuclear hormone receptor family. NR3 subfamily. In terms of assembly, binds DNA as a homodimer. Can form a heterodimer with ER-alpha.

Its subcellular location is the nucleus. In terms of biological role, binds estrogens with an affinity similar to that of ER-alpha, and activates expression of reporter genes containing estrogen response elements (ERE) in an estrogen-dependent manner. In Oreochromis niloticus (Nile tilapia), this protein is Estrogen receptor beta (esr2).